The following is a 369-amino-acid chain: Protein FAM187B (369 aa).

An N-terminal signal peptide occupies residues 1 to 17; that stretch reads MPPMLWLLLNFAAPALG. Residues 18–333 are Extracellular-facing; that stretch reads FYFSISCPSG…PGRADSVLKG (316 aa). 3 N-linked (GlcNAc...) asparagine glycosylation sites follow: Asn-45, Asn-68, and Asn-130. A helical transmembrane segment spans residues 334–354; the sequence is LKLVLLVGTVLVLLGALLKFI. Topologically, residues 355 to 369 are cytoplasmic; that stretch reads RPSPGKRSKQVLMVK.

The protein belongs to the FAM187 family.

It is found in the membrane. This Macaca fascicularis (Crab-eating macaque) protein is Protein FAM187B (FAM187B).